Reading from the N-terminus, the 465-residue chain is Sodium-dependent phosphate transport protein 1 (465 aa).

3 N-linked (GlcNAc...) asparagine glycosylation sites follow: Asn39, Asn47, and Asn56. The next 10 membrane-spanning stretches (helical) occupy residues 79–99 (GLIL…VGYL), 117–137 (SLMS…VIVC), 176–196 (FVMG…LLGW), 199–219 (VFYI…FLFF), 260–280 (LPLW…SLLV), 304–324 (LPYL…DFFL), 337–356 (LFTT…LLYL), 363–383 (TVIF…GQLI), 399–419 (VTAL…GLIL), and 429–449 (KIFF…FLFA).

The protein belongs to the major facilitator superfamily. Sodium/anion cotransporter family. Interacts with PDZK1. Kidney.

It is found in the apical cell membrane. The catalysed reaction is 3 Na(+)(out) + phosphate(out) = 3 Na(+)(in) + phosphate(in). It carries out the reaction urate(out) = urate(in). Functionally, important for the resorption of phosphate by the kidney. May be involved in actively transporting phosphate into cells via Na(+) cotransport in the renal brush border membrane. Plays a role in urate transport in the kidney. The sequence is that of Sodium-dependent phosphate transport protein 1 (Slc17a1) from Mus musculus (Mouse).